The sequence spans 466 residues: Anthocyanidin 3-O-glucosyltransferase 1 (466 aa).

The Proton acceptor role is filled by histidine 22. An anthocyanidin-binding residues include histidine 22 and glutamine 87. The Charge relay role is filled by aspartate 122. A UDP-alpha-D-glucose-binding site is contributed by threonine 145. An an anthocyanidin-binding site is contributed by histidine 154. UDP-alpha-D-glucose is bound by residues alanine 346, glutamine 348, histidine 363, tryptophan 366, asparagine 367, serine 368, and glutamate 371. Residue glycine 386 coordinates an anthocyanidin. UDP-alpha-D-glucose contacts are provided by aspartate 387 and glutamine 388.

It belongs to the UDP-glycosyltransferase family. Highest expression detected in receptacles and achenes, with very low levels detected in runners, leaves, flowers, crowns and green receptacles.

The enzyme catalyses an anthocyanidin + UDP-alpha-D-glucose + H(+) = an anthocyanidin 3-O-beta-D-glucoside + UDP. It carries out the reaction cyanidin + UDP-alpha-D-glucose = cyanidin 3-O-beta-D-glucoside + UDP + H(+). It catalyses the reaction pelargonidin + UDP-alpha-D-glucose = pelargonidin 3-O-beta-D-glucoside + UDP. The catalysed reaction is peonidin + UDP-alpha-D-glucose = peonidin 3-O-beta-D-glucoside + UDP. The enzyme catalyses delphinidin + UDP-alpha-D-glucose = delphinidin 3-O-beta-D-glucoside + UDP. It carries out the reaction a flavonol + UDP-alpha-D-glucose = a flavonol 3-O-beta-D-glucoside + UDP + H(+). It participates in pigment biosynthesis; anthocyanin biosynthesis. Its function is as follows. In the presence of other necessary color factors, this glycosylation reaction allows the accumulation of anthocyanin pigments. Uses UDP-Glc as a sugar donor, but not UDP-Gal or UDP-GlcUA. Anthocyanidins are the preferred substrates in vivo, but flavonols can also be glucosylated in vitro. This is Anthocyanidin 3-O-glucosyltransferase 1 from Fragaria ananassa (Strawberry).